We begin with the raw amino-acid sequence, 293 residues long: Ribonuclease HIII (293 aa).

In terms of domain architecture, RNase H type-2 spans 78-293 (LPLIGTDEVG…TEKAKKRLER (216 aa)). The a divalent metal cation site is built by D84, E85, and D187.

This sequence belongs to the RNase HII family. RnhC subfamily. Mn(2+) is required as a cofactor. It depends on Mg(2+) as a cofactor.

The protein resides in the cytoplasm. The catalysed reaction is Endonucleolytic cleavage to 5'-phosphomonoester.. Endonuclease that specifically degrades the RNA of RNA-DNA hybrids. This Streptococcus pneumoniae (strain 70585) protein is Ribonuclease HIII.